Consider the following 209-residue polypeptide: J domain-containing protein spf31 (209 aa).

Residues 31–96 (NAYDVLDILP…KIRESLDSAY (66 aa)) enclose the J domain. 2 disordered regions span residues 149-175 (ANQQ…EKVW) and 187-209 (QDFL…RVLG). The segment covering 154-175 (EQARQDEIARERKRRVESEKVW) has biased composition (basic and acidic residues). Residues 192 to 209 (KTKKNNLKKKNKKPRVLG) are compositionally biased toward basic residues.

The polypeptide is J domain-containing protein spf31 (spf31) (Schizosaccharomyces pombe (strain 972 / ATCC 24843) (Fission yeast)).